The chain runs to 1279 residues: ATP-dependent helicase/nuclease subunit A (1279 aa).

The 496-residue stretch at Thr-4 to Arg-499 folds into the UvrD-like helicase ATP-binding domain. Ala-25–Thr-32 provides a ligand contact to ATP. Residues Glu-526–Gly-853 form the UvrD-like helicase C-terminal domain.

Belongs to the helicase family. AddA subfamily. Heterodimer of AddA and AddB/RexB. Requires Mg(2+) as cofactor.

It catalyses the reaction Couples ATP hydrolysis with the unwinding of duplex DNA by translocating in the 3'-5' direction.. The enzyme catalyses ATP + H2O = ADP + phosphate + H(+). The heterodimer acts as both an ATP-dependent DNA helicase and an ATP-dependent, dual-direction single-stranded exonuclease. Recognizes the chi site generating a DNA molecule suitable for the initiation of homologous recombination. The AddA nuclease domain is required for chi fragment generation; this subunit has the helicase and 3' -&gt; 5' nuclease activities. The protein is ATP-dependent helicase/nuclease subunit A of Clostridium botulinum (strain Kyoto / Type A2).